The chain runs to 445 residues: Chromosome partition protein MukF (445 aa).

Positions 213–241 (LSETSATLKELQDTLQAAGDELQTQILDI) are leucine-zipper.

The protein belongs to the MukF family. In terms of assembly, interacts, and probably forms a ternary complex, with MukE and MukB via its C-terminal region. The complex formation is stimulated by calcium or magnesium. It is required for an interaction between MukE and MukB.

Its subcellular location is the cytoplasm. It is found in the nucleoid. In terms of biological role, involved in chromosome condensation, segregation and cell cycle progression. May participate in facilitating chromosome segregation by condensation DNA from both sides of a centrally located replisome during cell division. Not required for mini-F plasmid partitioning. Probably acts via its interaction with MukB and MukE. Overexpression results in anucleate cells. It has a calcium binding activity. This is Chromosome partition protein MukF from Vibrio atlanticus (strain LGP32) (Vibrio splendidus (strain Mel32)).